The following is a 300-amino-acid chain: N-carbamoylputrescine amidase (300 aa).

In terms of domain architecture, CN hydrolase spans 8-266; sequence VTVAALQFAC…EAVLVAQFDL (259 aa). Catalysis depends on glutamate 47, which acts as the Proton acceptor. Catalysis depends on lysine 120, which acts as the Proton donor. Catalysis depends on cysteine 157, which acts as the Nucleophile.

This sequence belongs to the carbon-nitrogen hydrolase superfamily. In terms of assembly, homooctamer.

The catalysed reaction is N-carbamoylputrescine + H2O + 2 H(+) = putrescine + NH4(+) + CO2. It participates in amine and polyamine biosynthesis; putrescine biosynthesis via agmatine pathway; putrescine from N-carbamoylputrescine (amidase route): step 1/1. In terms of biological role, involved in polyamine biosynthesis. The protein is N-carbamoylputrescine amidase (CPA) of Solanum lycopersicum (Tomato).